Consider the following 527-residue polypeptide: Splicing factor MUD2 (527 aa).

The tract at residues 36-169 (DNAVIDTHFK…SKFNGDRDKR (134 aa)) is disordered. The span at 42-55 (THFKRQKSDGELPK) shows a compositional bias: basic and acidic residues. Residue serine 49 is modified to Phosphoserine. Positions 60–85 (RNVSHSNNRGPSSIITMSTNRTTYEQ) are enriched in polar residues. Positions 94–109 (SYRDASGRSYNRENRY) are enriched in basic and acidic residues. Over residues 110 to 122 (SSHNTGPQWNNNP) the composition is skewed to polar residues. Composition is skewed to basic and acidic residues over residues 125–141 (RQRDERRGRNERFDRRG) and 155–169 (RKNEGSKFNGDRDKR). In terms of domain architecture, RRM spans 424-511 (LLLLNCLDPL…QFNDRTVLCT (88 aa)).

MSL5, MUD2 and PRP40 interact to form the commitment complex 2 (CC2), a precursor of mature spliceosomes.

Splicing factor that contacts pre-mRNA directly and is a component of the pre-mRNA-U1 snRNP complex (commitment complex 2) that forms during early spliceosome assembly in yeast extracts. This Saccharomyces cerevisiae (strain ATCC 204508 / S288c) (Baker's yeast) protein is Splicing factor MUD2 (MUD2).